We begin with the raw amino-acid sequence, 503 residues long: Maturase K (503 aa).

It belongs to the intron maturase 2 family. MatK subfamily.

The protein resides in the plastid. It is found in the chloroplast. Functionally, usually encoded in the trnK tRNA gene intron. Probably assists in splicing its own and other chloroplast group II introns. This chain is Maturase K, found in Psilotum nudum (Whisk fern).